We begin with the raw amino-acid sequence, 351 residues long: MTLEAIKYKSGQLQILDQLLLPAESKYIPVAGVKDGWSAIHKMQVRGAPAIAIVGCLSLVVEIYDKQYETKAALANEIGEHLQYLVTSRPTAVNLKLAADDVKGQVESLLANETVTVDGMKQEVIKAIEYMLEKDISDNRAIGDNGANVLVKGVDRPLKLLTHCNTGSLATAGYGTALGVIRSVNERNLLEHVYCTETRPYNQGARLTAYELVHDKLPATLVTDSMVAALLNSRKIDAIIVGADRVAANGDTANKIGTYQMAVVAKHHGVPFYVAAPFTSIDVAIEDGSHIKIEERPEHELTHIGGQRIAAPGIGCWNPAFDVTPAELITGIITERGVLKPCELAEKVRQK.

Catalysis depends on Asp-244, which acts as the Proton donor.

The protein belongs to the eIF-2B alpha/beta/delta subunits family. MtnA subfamily.

It is found in the cytoplasm. It localises to the nucleus. The enzyme catalyses 5-(methylsulfanyl)-alpha-D-ribose 1-phosphate = 5-(methylsulfanyl)-D-ribulose 1-phosphate. Its pathway is amino-acid biosynthesis; L-methionine biosynthesis via salvage pathway; L-methionine from S-methyl-5-thio-alpha-D-ribose 1-phosphate: step 1/6. Functionally, catalyzes the interconversion of methylthioribose-1-phosphate (MTR-1-P) into methylthioribulose-1-phosphate (MTRu-1-P). This chain is Methylthioribose-1-phosphate isomerase, found in Anopheles gambiae (African malaria mosquito).